We begin with the raw amino-acid sequence, 120 residues long: Immunogenic miracidial antigen 5D (120 aa).

Residues 41-120 are disordered; sequence HIDVGDEDYH…PKKYGSGYKH (80 aa). Acidic residues predominate over residues 45–66; that stretch reads GDEDYHDGDDDVDYTDDVDDVD.

It belongs to the immunogenic miracidial antigen family.

The chain is Immunogenic miracidial antigen 5D (5D) from Schistosoma japonicum (Blood fluke).